The primary structure comprises 517 residues: Cytochrome P450 monooxygenase polD (517 aa).

Residues 5-27 form a helical membrane-spanning segment; it reads VVLVGIVVLVLAYLSSTGKVYPH. Cys435 provides a ligand contact to heme.

Belongs to the cytochrome P450 family. It depends on heme as a cofactor.

It is found in the membrane. Cytochrome P450 monooxygenase; part of the gene cluster that mediates the biosynthesis of antifungal fernane-type triterpenoid polytolypin. PolD doe not seem to be involved in the biosynthesis of polytolypin. Within the pathway, the triterpene cyclase polA first catalyzes the cyclization of 2,3-oxidosqualene to motiol, polc converts the 4-alpha-methyl group of motiol to a carboxyl group, polB is responsible for appending a hydroxyl group at the 2-alpha position and polE is a dual functional P450, which can catalyze the formation of both the 1-beta-hydroxyl group and 10-beta-carboxyl group. This chain is Cytochrome P450 monooxygenase polD, found in Polytolypa hystricis (strain UAMH7299).